The following is an 83-amino-acid chain: Cytochrome b559 subunit alpha (83 aa).

The helical transmembrane segment at 21 to 35 threads the bilayer; the sequence is VIHSITIPSLFIAGW. H23 is a heme binding site.

It belongs to the PsbE/PsbF family. Heterodimer of an alpha subunit and a beta subunit. PSII is composed of 1 copy each of membrane proteins PsbA, PsbB, PsbC, PsbD, PsbE, PsbF, PsbH, PsbI, PsbJ, PsbK, PsbL, PsbM, PsbT, PsbX, PsbY, PsbZ, Psb30/Ycf12, at least 3 peripheral proteins of the oxygen-evolving complex and a large number of cofactors. It forms dimeric complexes. Requires heme b as cofactor.

It is found in the plastid. Its subcellular location is the chloroplast thylakoid membrane. Its function is as follows. This b-type cytochrome is tightly associated with the reaction center of photosystem II (PSII). PSII is a light-driven water:plastoquinone oxidoreductase that uses light energy to abstract electrons from H(2)O, generating O(2) and a proton gradient subsequently used for ATP formation. It consists of a core antenna complex that captures photons, and an electron transfer chain that converts photonic excitation into a charge separation. The polypeptide is Cytochrome b559 subunit alpha (Daucus carota (Wild carrot)).